The primary structure comprises 149 residues: Calmodulin-1 (149 aa).

Position 2 is an N-acetylalanine (A2). EF-hand domains follow at residues 8–43 (DQIA…LGQN), 44–79 (PTEA…KMKD), 81–116 (DSEE…LGEK), and 117–149 (LTDE…MMAK). Ca(2+) contacts are provided by D21, D23, D25, C27, E32, D57, D59, N61, T63, E68, D94, D96, N98, and E105. K116 is modified (N6,N6,N6-trimethyllysine). Ca(2+) contacts are provided by D130, D132, D134, Q136, and E141.

This sequence belongs to the calmodulin family.

Its function is as follows. Calmodulin mediates the control of a large number of enzymes, ion channels and other proteins by Ca(2+). Among the enzymes to be stimulated by the calmodulin-Ca(2+) complex are a number of protein kinases and phosphatases. In Oryza sativa subsp. indica (Rice), this protein is Calmodulin-1 (CAM1-1).